Reading from the N-terminus, the 432-residue chain is MLMKKVPHIIHRANQSGGKRYERMVAFVAFFRTNLLHDRIFISAGSLAFQTLLSIVPVLAVVLSVLNLFEVFTPFQHSLETFLVENFMPATGRLLHGYLLEFVGKTGNIPLLGSLLLFVIALSLLSTVDQTLNDIWGIRAPRKALQGFTLYWTVLTLGPLLIVSSLAASSYVWYTIFTDEGALFELKTRLLALFPFINSIVAFFLLYMLVPKRRVRIAHAFAGALVASLLLELSKRWFLFYVTHVATFEHIYGALSVVPMLFFWVYLAWVVVLVGAEFVYCLGAFAPSTPTAEAQGSLRYLSLPLAVLATLHNAIEKGAPLSLKSLSRELSTLPFNLLRDMVDLLLDRQVLHLSTRGELALSRNLHAMSLYELYQIIPQPINATEKSLLFSESKSVHLAPLSLEVEACLQERMATPIAELLQHSFLKASTVD.

Transmembrane regions (helical) follow at residues 52–72, 108–128, 148–168, 190–210, 220–240, and 254–274; these read LLSI…FEVF, NIPL…LSTV, FTLY…SLAA, LLAL…YMLV, AFAG…WFLF, and ALSV…VVLV.

The protein belongs to the UPF0761 family.

It is found in the cell inner membrane. The protein is UPF0761 membrane protein Cag_0935 of Chlorobium chlorochromatii (strain CaD3).